Reading from the N-terminus, the 180-residue chain is MTARLQEFYKEKVVPELIKQFGYKSVMEVPRITKITLNMGLGEAINDKKVIEHATGDLIKIAGQKPIVTKARKAIAGFKIRQGYPIGTMVTLRGQRMYEFLDRFITVSLPRVRDFRGVSGKAFDGRGNYNIGVKEQIIFPEIEYDKIDALRGLNISITTTAKNDEEAKALLNAFKFPFRN.

Belongs to the universal ribosomal protein uL5 family. In terms of assembly, part of the 50S ribosomal subunit; part of the 5S rRNA/L5/L18/L25 subcomplex. Contacts the 5S rRNA and the P site tRNA. Forms a bridge to the 30S subunit in the 70S ribosome.

Functionally, this is one of the proteins that bind and probably mediate the attachment of the 5S RNA into the large ribosomal subunit, where it forms part of the central protuberance. In the 70S ribosome it contacts protein S13 of the 30S subunit (bridge B1b), connecting the 2 subunits; this bridge is implicated in subunit movement. Contacts the P site tRNA; the 5S rRNA and some of its associated proteins might help stabilize positioning of ribosome-bound tRNAs. This chain is Large ribosomal subunit protein uL5, found in Ralstonia pickettii (strain 12J).